Here is a 1219-residue protein sequence, read N- to C-terminus: N-acetylglucosamine-1-phosphotransferase subunits alpha/beta (1219 aa).

A helical transmembrane segment spans residues 27 to 47 (LCFGGLVLMIVSAFQFGEVVV). N-linked (GlcNAc...) asparagine glycosylation is found at N88, N119, N153, N292, and N381. Intrachain disulfides connect C443/C466, C457/C473, C508/C531, and C522/C538. 2 LNR repeats span residues 443 to 478 (CAEG…GSSR) and 508 to 538 (CNQG…VGDC). D454 provides a ligand contact to Ca(2+). N462 is a glycosylation site (N-linked (GlcNAc...) asparagine). Residues D469, D472, D519, D534, and D537 each contribute to the Ca(2+) site. N-linked (GlcNAc...) asparagine glycosylation is found at N554, N610, N617, N645, N696, N726, N823, and N974. The tract at residues 640–666 (ELPKSNTSTPVRDKEEEPKPTVATPEP) is disordered. The region spanning 696–804 (NETLLPDEVK…DDVTTKAQSR (109 aa)) is the DMAP1-binding domain. Residues 970-1005 (VQQLNISEVFDEIDTDHSGVLSDREIRTLATRIHEL) enclose the EF-hand domain. Ca(2+) is bound by residues D983, D985, S987, and E994. N-linked (GlcNAc...) asparagine glycans are attached at residues N1021, N1029, and N1094. A helical transmembrane segment spans residues 1180–1200 (VLVTLVVFTVMSFFAEQLVML).

This sequence belongs to the stealth family. As to quaternary structure, hexamer of two alpha, two beta and two gamma (GNPTG) subunits; disulfide-linked. The alpha and/or the beta subunits of the enzyme constitute the catalytic subunits. The alpha- and beta-subunits are generated by a proteolytic cleavage by mbtps1 protease at the Gln-893-Asp-894 bond.

The protein resides in the golgi apparatus membrane. It carries out the reaction N(4)-[alpha-D-mannosyl-(1-&gt;2)-alpha-D-mannosyl-(glycan)]-L-asparaginyl-[protein] + UDP-N-acetyl-alpha-D-glucosamine = N(4)-[6-(N-acetyl-alpha-D-glucosaminyl-1-phospho)-alpha-D-mannosyl-(1-&gt;2)-alpha-D-mannosyl-(glycan)]-L-asparaginyl-[protein] + UMP + H(+). Catalyzes the formation of mannose 6-phosphate (M6P) markers on high mannose type oligosaccharides in the Golgi apparatus. M6P residues are required to bind to the M6P receptors (MPR), which mediate the vesicular transport of lysosomal enzymes to the endosomal/prelysosomal compartment. In Danio rerio (Zebrafish), this protein is N-acetylglucosamine-1-phosphotransferase subunits alpha/beta (gnptab).